The primary structure comprises 972 residues: Hemoglobin and hemoglobin-haptoglobin-binding protein (972 aa).

A signal peptide spans 1 to 22 (MKANKLSAITLCILGYAHTVYA). A TonB box motif is present at residues 32–39 (ETIVVSSE). In terms of domain architecture, TBDR plug spans 38 to 167 (SEDDSVHNKN…LGGTVSFESK (130 aa)). Positions 175–972 (DKNYHFGYKT…NFRVNAEITF (798 aa)) constitute a TBDR beta-barrel domain. The short motif at 955–972 (KRFNAPGRNFRVNAEITF) is the TonB C-terminal box element.

Belongs to the TonB-dependent receptor family. Hemoglobin/haptoglobin binding protein subfamily.

It localises to the cell outer membrane. Functionally, acts as a receptor for hemoglobin or the hemoglobin/haptoglobin complex of the host and is required for heme uptake. May be involved in virulence. The polypeptide is Hemoglobin and hemoglobin-haptoglobin-binding protein (Haemophilus ducreyi (strain 35000HP / ATCC 700724)).